A 476-amino-acid chain; its full sequence is Arginine biosynthesis bifunctional protein ArgJ, mitochondrial (476 aa).

6 residues coordinate substrate: threonine 193, lysine 219, threonine 237, glutamate 337, asparagine 471, and serine 476. Threonine 237 (nucleophile) is an active-site residue.

It belongs to the ArgJ family. In terms of assembly, heterodimer of an alpha and a beta chain. The alpha and beta chains are autoproteolytically processed from a single precursor protein within the mitochondrion.

The protein resides in the mitochondrion matrix. It catalyses the reaction N(2)-acetyl-L-ornithine + L-glutamate = N-acetyl-L-glutamate + L-ornithine. It carries out the reaction L-glutamate + acetyl-CoA = N-acetyl-L-glutamate + CoA + H(+). It functions in the pathway amino-acid biosynthesis; L-arginine biosynthesis; L-ornithine and N-acetyl-L-glutamate from L-glutamate and N(2)-acetyl-L-ornithine (cyclic): step 1/1. It participates in amino-acid biosynthesis; L-arginine biosynthesis; N(2)-acetyl-L-ornithine from L-glutamate: step 1/4. Functionally, catalyzes two activities which are involved in the cyclic version of arginine biosynthesis: the synthesis of acetylglutamate from glutamate and acetyl-CoA, and of ornithine by transacetylation between acetylornithine and glutamate. The protein is Arginine biosynthesis bifunctional protein ArgJ, mitochondrial of Cryptococcus neoformans var. neoformans serotype D (strain JEC21 / ATCC MYA-565) (Filobasidiella neoformans).